A 193-amino-acid chain; its full sequence is Xanthine phosphoribosyltransferase (193 aa).

Xanthine is bound by residues Leu-20 and Thr-27. 128–132 (ANGQA) provides a ligand contact to 5-phospho-alpha-D-ribose 1-diphosphate. Lys-156 lines the xanthine pocket.

It belongs to the purine/pyrimidine phosphoribosyltransferase family. Xpt subfamily. In terms of assembly, homodimer.

The protein resides in the cytoplasm. The enzyme catalyses XMP + diphosphate = xanthine + 5-phospho-alpha-D-ribose 1-diphosphate. It participates in purine metabolism; XMP biosynthesis via salvage pathway; XMP from xanthine: step 1/1. In terms of biological role, converts the preformed base xanthine, a product of nucleic acid breakdown, to xanthosine 5'-monophosphate (XMP), so it can be reused for RNA or DNA synthesis. This Streptococcus uberis (strain ATCC BAA-854 / 0140J) protein is Xanthine phosphoribosyltransferase.